Reading from the N-terminus, the 363-residue chain is DNA replication and repair protein RecF (363 aa).

30–37 (GDNAQGKT) provides a ligand contact to ATP.

It belongs to the RecF family.

The protein resides in the cytoplasm. Functionally, the RecF protein is involved in DNA metabolism; it is required for DNA replication and normal SOS inducibility. RecF binds preferentially to single-stranded, linear DNA. It also seems to bind ATP. The polypeptide is DNA replication and repair protein RecF (Lachnospira eligens (strain ATCC 27750 / DSM 3376 / VPI C15-48 / C15-B4) (Eubacterium eligens)).